A 906-amino-acid polypeptide reads, in one-letter code: Protein translocase subunit SecA (906 aa).

ATP contacts are provided by residues Gln90, 108–112 (GEGKT), and Asp503. The segment at 845-882 (TAAEAPASVPQPQAAVAPQPAPELVGADNGESQPQAWG) is disordered. Over residues 846–862 (AAEAPASVPQPQAAVAP) the composition is skewed to low complexity. The Zn(2+) site is built by Cys890, Cys892, Cys901, and His902.

It belongs to the SecA family. As to quaternary structure, monomer and homodimer. Part of the essential Sec protein translocation apparatus which comprises SecA, SecYEG and auxiliary proteins SecDF-YajC and YidC. Zn(2+) serves as cofactor.

The protein resides in the cell inner membrane. Its subcellular location is the cytoplasm. It catalyses the reaction ATP + H2O + cellular proteinSide 1 = ADP + phosphate + cellular proteinSide 2.. Part of the Sec protein translocase complex. Interacts with the SecYEG preprotein conducting channel. Has a central role in coupling the hydrolysis of ATP to the transfer of proteins into and across the cell membrane, serving both as a receptor for the preprotein-SecB complex and as an ATP-driven molecular motor driving the stepwise translocation of polypeptide chains across the membrane. The protein is Protein translocase subunit SecA of Cereibacter sphaeroides (strain ATCC 17025 / ATH 2.4.3) (Rhodobacter sphaeroides).